Reading from the N-terminus, the 352-residue chain is tRNA-specific 2-thiouridylase MnmA (352 aa).

ATP-binding positions include 7–14 and L33; that span reads GLSGGVDS. Catalysis depends on C94, which acts as the Nucleophile. C94 and C193 are oxidised to a cystine. G119 is a binding site for ATP. Positions 143-145 are interaction with tRNA; that stretch reads KDQ. C193 functions as the Cysteine persulfide intermediate in the catalytic mechanism. Residues 298–299 form an interaction with tRNA region; that stretch reads RY.

This sequence belongs to the MnmA/TRMU family.

It localises to the cytoplasm. It catalyses the reaction S-sulfanyl-L-cysteinyl-[protein] + uridine(34) in tRNA + AH2 + ATP = 2-thiouridine(34) in tRNA + L-cysteinyl-[protein] + A + AMP + diphosphate + H(+). Functionally, catalyzes the 2-thiolation of uridine at the wobble position (U34) of tRNA, leading to the formation of s(2)U34. The sequence is that of tRNA-specific 2-thiouridylase MnmA from Nostoc sp. (strain PCC 7120 / SAG 25.82 / UTEX 2576).